A 380-amino-acid polypeptide reads, in one-letter code: ATPase ASNA1 homolog (380 aa).

48–55 (KGGVGKTT) provides a ligand contact to ATP. Aspartate 77 is an active-site residue. Residues glutamate 248 and asparagine 275 each contribute to the ATP site.

Belongs to the arsA ATPase family. In terms of assembly, homodimer.

The protein localises to the cytoplasm. It is found in the endoplasmic reticulum. In terms of biological role, ATPase required for the post-translational delivery of tail-anchored (TA) proteins to the endoplasmic reticulum. Recognizes and selectively binds the transmembrane domain of TA proteins in the cytosol. This complex then targets to the endoplasmic reticulum by membrane-bound receptors, where the tail-anchored protein is released for insertion. This process is regulated by ATP binding and hydrolysis. ATP binding drives the homodimer towards the closed dimer state, facilitating recognition of newly synthesized TA membrane proteins. ATP hydrolysis is required for insertion. Subsequently, the homodimer reverts towards the open dimer state, lowering its affinity for the membrane-bound receptor, and returning it to the cytosol to initiate a new round of targeting. The chain is ATPase ASNA1 homolog from Plasmodium chabaudi chabaudi.